The chain runs to 1873 residues: Ankyrin repeat domain-containing protein 31 (1873 aa).

2 disordered regions span residues 1–27 (MEEG…SDLE) and 361–380 (EPLS…DQET). Residues 361-379 (EPLSNKRNSNSVTNSSDQE) are compositionally biased toward polar residues. ANK repeat units follow at residues 488 to 517 (FGEN…NVNQ), 521 to 550 (AGWT…DVNI), and 554 to 583 (YQIT…DPLF). Positions 707-740 (TGLRKGNLHNVKDPNTNVPKGIGRRKTQHKRTQV) are disordered. Positions 728 to 737 (IGRRKTQHKR) are enriched in basic residues. 3 ANK repeats span residues 1154–1183 (RGES…DVNL), 1187–1216 (AGWT…KVNC), and 1220–1249 (DGIL…NPNQ). Disordered regions lie at residues 1242–1263 (QNGA…EADD), 1449–1482 (RSEI…SGSM), 1512–1549 (FSGN…PSQP), and 1606–1634 (CDQD…ASES). The segment covering 1250–1263 (KDQKQKSALDEADD) has biased composition (basic and acidic residues). Polar residues-rich tracts occupy residues 1460–1482 (ELTS…SGSM) and 1515–1525 (NDMNSKQNGSD). Basic and acidic residues predominate over residues 1535-1544 (RHSDGTEKNK). Residues 1621-1632 (KTSSQQSPTGAS) show a composition bias toward polar residues. Residues 1683–1778 (KKALNYSTAP…TYLGKELLRY (96 aa)) form the RAMA domain.

Interacts with REC114; the interaction is direct. Interacts with IHO1.

It localises to the nucleus. Its subcellular location is the chromosome. In terms of biological role, required for DNA double-strand breaks (DSBs) formation during meiotic recombination. Regulates the spatial and temporal patterns of pre-DSB recombinosome assembly and recombination activity by acting as a scaffold that anchors REC114 and other factors to specific genomic locations, thereby regulating DSB formation. Plays a key role in recombination in the pseudoautosomal regions of sex chromosomes. The protein is Ankyrin repeat domain-containing protein 31 of Homo sapiens (Human).